The primary structure comprises 741 residues: Isocitrate dehydrogenase [NADP] (741 aa).

2 residues coordinate NADP(+): Asn85 and Ser87. 5 residues coordinate D-threo-isocitrate: Ser132, Asn135, Arg139, Arg145, and Lys255. Asn135 provides a ligand contact to NADP(+). Asp350 lines the Mn(2+) pocket. 2 residues coordinate D-threo-isocitrate: Tyr420 and Arg547. Asp548 is a Mn(2+) binding site. Positions 585, 589, 600, 602, and 649 each coordinate NADP(+).

It belongs to the monomeric-type IDH family. In terms of assembly, monomer. Requires Mg(2+) as cofactor. The cofactor is Mn(2+).

The protein localises to the cytoplasm. The enzyme catalyses D-threo-isocitrate + NADP(+) = 2-oxoglutarate + CO2 + NADPH. Its activity is regulated as follows. Activity is inhibited in the presence of Ca(2+). Catalyzes the oxidative decarboxylation of isocitrate to 2-oxoglutarate and carbon dioxide with the concomitant reduction of NADP(+). The protein is Isocitrate dehydrogenase [NADP] of Azotobacter vinelandii.